We begin with the raw amino-acid sequence, 135 residues long: Holo-[acyl-carrier-protein] synthase (135 aa).

Mg(2+)-binding residues include Asp-7 and Glu-57.

Belongs to the P-Pant transferase superfamily. AcpS family. Requires Mg(2+) as cofactor.

Its subcellular location is the cytoplasm. It carries out the reaction apo-[ACP] + CoA = holo-[ACP] + adenosine 3',5'-bisphosphate + H(+). In terms of biological role, transfers the 4'-phosphopantetheine moiety from coenzyme A to a Ser of acyl-carrier-protein. This Corynebacterium glutamicum (strain R) protein is Holo-[acyl-carrier-protein] synthase.